A 154-amino-acid chain; its full sequence is Large ribosomal subunit protein uL13 (154 aa).

Belongs to the universal ribosomal protein uL13 family. In terms of assembly, part of the 50S ribosomal subunit.

Its function is as follows. This protein is one of the early assembly proteins of the 50S ribosomal subunit, although it is not seen to bind rRNA by itself. It is important during the early stages of 50S assembly. This is Large ribosomal subunit protein uL13 from Rhodopseudomonas palustris (strain BisB5).